Consider the following 64-residue polypeptide: Movement protein TGBp3 (64 aa).

Over M1–V4 the chain is Lumenal. The chain crosses the membrane as a helical span at residues A5 to P27. Residues E28 to L64 lie on the Cytoplasmic side of the membrane.

Belongs to the Tymovirales TGBp3 protein family.

Its subcellular location is the host endoplasmic reticulum membrane. Its function is as follows. Plays a role in viral cell-to-cell propagation, by facilitating genome transport to neighboring plant cells through plasmosdesmata. May induce the formation of granular vesicles derived from the Endoplasmic reticulum, which align on actin filaments. The protein is Movement protein TGBp3 of Lily symptomless virus (LSV).